The sequence spans 533 residues: Tyrosine protein-kinase src-1 (533 aa).

Residue G2 is the site of N-myristoyl glycine attachment. One can recognise an SH3 domain in the interval 71–132 (QERETLVALY…PRNFVAKQQT (62 aa)). The SH2 domain maps to 138-237 (WYAGKIPRNR…GLCCQLTFPA (100 aa)). A Protein kinase domain is found at 262–521 (LHLKRKLGDG…TLYHFFDDYF (260 aa)). ATP is bound by residues 268 to 276 (LGDGNFGEV) and K290. The active-site Proton acceptor is D381. A Phosphotyrosine; by autocatalysis modification is found at Y416. Residue Y528 is modified to Phosphotyrosine.

Belongs to the protein kinase superfamily. Tyr protein kinase family. SRC subfamily. In terms of assembly, interacts (via SH2 domain and SH3 domain) with unc-5 (via cytoplasmic domain); the interaction requires kinase activity. Interacts (when activated and phosphorylated at 'Tyr-416') with ina-1 (via cytoplasmic domain) and with ced-2 (via SH2 domain). Requires Mg(2+) as cofactor. It depends on Mn(2+) as a cofactor. May be phosphorylated on Tyr-528 by csk-1. As to expression, expressed in some neurons (ASE, ADF, AVA, AUA, RMDV and BAG) in the head region, anchor cell, vulva, cells around anus, body wall muscle, pharyngeal muscles in procorpus and metacorpus. Expressed in gonadal distal tip cells.

It localises to the cell membrane. The protein resides in the cell projection. It is found in the phagocytic cup. It carries out the reaction L-tyrosyl-[protein] + ATP = O-phospho-L-tyrosyl-[protein] + ADP + H(+). With respect to regulation, may be activated by autophosphorylation. May be inhibited by csk-1-mediated phosphorylation. Functionally, non-receptor tyrosine-protein kinase which plays a role in endoderm development by controlling spindle orientation in EMS blastomere, probably downstream of receptor mes-1. Also involved in embryonic body morphogenesis, especially in the formation of the pharynx and the intestine. May be dispensable for pharyngeal muscle organization in the adult. Probably phosphorylates netrin receptor unc-5, to regulate distal tip cell (DTC) migration during gonad development and in axon repulsion. Plays a role in the migration of the QR neuroblast, a precursor of the AVM neuron, and in the migration of the axon cone of AVM, ALM, CAN and PVM neurons. May act downstream of migratory protein mig-13 to control AVM neuron migration. Probably downstream of integrin ina-1/pat-3, plays a role in the clearance of apoptotic cells during mid-embryogenesis. Phosphorylates ced-1 at 'Tyr-1019' which promotes ced-1 proteasomal degradation, maintaining appropriate ced-1 levels for apoptotic cell clearance. This is Tyrosine protein-kinase src-1 from Caenorhabditis elegans.